Reading from the N-terminus, the 1076-residue chain is Nucleoporin NUP1 (1076 aa).

A compositionally biased stretch (low complexity) spans 1-11; sequence MSSNTSSVMSS. Residues 1–39 form a disordered region; it reads MSSNTSSVMSSPRVEKRSFSSTLKSFFTNPNKKRPSSKK. Ser-2 is subject to N-acetylserine. Residues 19–30 are compositionally biased toward polar residues; that stretch reads FSSTLKSFFTNP. Ser-54 and Ser-161 each carry phosphoserine. 2 disordered regions span residues 143-183 and 224-260; these read SQSK…TNVG and KKDNKDKEGNAGGDQKTSENRNNIKSSISNGNLATGP. Polar residues-rich tracts occupy residues 154–170 and 243–260; these read LCTSSTPSPIKNGSCTR and NRNNIKSSISNGNLATGP. One copy of the FXF 1 repeat lies at 336 to 338; sequence FDF. Thr-381 is modified (phosphothreonine). A Phosphoserine modification is found at Ser-383. An FXF 2 repeat occupies 384–386; sequence FNF. Residues 403–518 are disordered; sequence TTLFNFGGKS…SFVFGASDKQ (116 aa). 2 FXFG repeats span residues 406–409 and 422–425; these read FNFG and FKFG. A compositionally biased stretch (basic and acidic residues) spans 426 to 439; the sequence is KTSEKSENHTESDA. 2 FXFG repeats span residues 448 to 451 and 484 to 487; these read FSFG and FDFG. A compositionally biased stretch (basic and acidic residues) spans 488-505; it reads KTGDQKETKKGESEKDAS. FXFG repeat units follow at residues 510–513, 525–528, 543–546, and 571–574; these read FVFG and FTFG. Residues 548–743 are disordered; that stretch reads AATAKETHTK…SMKSTASTAA (196 aa). FXF repeat units follow at residues 591–593, 614–616, 636–638, and 657–659; these read FSF and FTF. Polar residues-rich tracts occupy residues 634-649 and 658-667; these read PTFSFTEPAQKDSSVV and TFASSKTSQP. Residue Ser-637 is modified to Phosphoserine. The stretch at 671–674 is one FXFG 9 repeat; sequence FSFG. An FXF 7 repeat occupies 689–691; sequence FSF. FXFG repeat units lie at residues 708-711 and 727-730; these read FTFG and FSFG. Residues 708–723 show a composition bias toward low complexity; the sequence is FTFGGSTTNNTTTTST. One copy of the FXF 8 repeat lies at 753-755; that stretch reads FSF. One copy of the FXFG 12 repeat lies at 800 to 803; the sequence is FSFG. 2 FXF repeats span residues 819–821 and 866–868; these read FSF and FGF. One copy of the FXFG 13 repeat lies at 885–888; sequence FNFG. The stretch at 929 to 931 is one FXF 11 repeat; it reads FNF. Residues 940–979 are disordered; it reads GGSVFNMNGNTNANTVFAGSNNQPHQSQTPSFNTNSSFTP. Residues 944-964 are compositionally biased toward polar residues; sequence FNMNGNTNANTVFAGSNNQPH. Low complexity predominate over residues 965–979; the sequence is QSQTPSFNTNSSFTP. FG repeat units follow at residues 1008 to 1009, 1027 to 1028, and 1038 to 1039; these read FG. A disordered region spans residues 1025 to 1054; sequence SIFGGAGGVPTTSFGQPQSAPNQMGMGTNN. The segment covering 1034-1045 has biased composition (polar residues); sequence PTTSFGQPQSAP. Residues 1040 to 1076 are interaction with KAP95; it reads QPQSAPNQMGMGTNNGMSMGGGVMANRKIARMRHSKR.

Component of the nuclear pore complex (NPC). NPC constitutes the exclusive means of nucleocytoplasmic transport. NPCs allow the passive diffusion of ions and small molecules and the active, nuclear transport receptor-mediated bidirectional transport of macromolecules such as proteins, RNAs, ribonucleoparticles (RNPs), and ribosomal subunits across the nuclear envelope. Due to its 8-fold rotational symmetry, all subunits are present with 8 copies or multiples thereof. Interacts through its FG repeats with nuclear transport receptors. Binds to the nuclear basket of the NPC through NUP60. Interacts with KAP122. In terms of processing, phosphorylated by CDC28.

It localises to the nucleus. The protein localises to the nuclear pore complex. It is found in the nucleus membrane. In terms of biological role, functions as a component of the nuclear pore complex (NPC). NPC components, collectively referred to as nucleoporins (NUPs), can play the role of both NPC structural components and of docking or interaction partners for transiently associated nuclear transport factors. Active directional transport is assured by both, a Phe-Gly (FG) repeat affinity gradient for these transport factors across the NPC and a transport cofactor concentration gradient across the nuclear envelope (GSP1 and GSP2 GTPases associated predominantly with GTP in the nucleus, with GDP in the cytoplasm). As one of the FG repeat nucleoporins NUP1 is involved in interactions with and guidance of nuclear transport receptors such as SRP1-KAP95 (importin alpha and beta) through the NPC. Like the closely related NUP2 it also plays an important role in disassembling and recycling SRP1-KAP95 to the cytoplasm after nuclear import. Upon entry of the heterotrimeric SRP1-KAP95-cargo complex in the nucleus, NUP1 binds through its C-terminus to KAP95, thus accelerating the release of KAP95 and, indirectly, of the nuclear localization signal (NLS)-containing cargo from the SRP1-KAP95-cargo complex. This chain is Nucleoporin NUP1 (NUP1), found in Saccharomyces cerevisiae (strain ATCC 204508 / S288c) (Baker's yeast).